A 188-amino-acid chain; its full sequence is MSIKNDKWIRRMAEQHKMIEPFAPHLVSRCDERSIISYGTSSYGYDVRCADEFKIFTNINSAIVDPKQFDSKSFVDVQSDVCIIPPNSFALARTIEYFRIPRDVLTICLGKSTYARCGIIVNVTPLEPEWEGHVTLEFSNTTPLPAKIYAHEGVAQLLFLQADDVCETSYKDRKGKYQGQTGVTLPRA.

DCTP contacts are provided by residues lysine 111–arginine 116, threonine 135–glutamate 137, glutamine 156, tyrosine 170, and glutamine 180. Glutamate 137 (proton donor/acceptor) is an active-site residue.

The protein belongs to the dCTP deaminase family. As to quaternary structure, homotrimer.

The enzyme catalyses dCTP + H2O + H(+) = dUTP + NH4(+). Its pathway is pyrimidine metabolism; dUMP biosynthesis; dUMP from dCTP (dUTP route): step 1/2. Its function is as follows. Catalyzes the deamination of dCTP to dUTP. The sequence is that of dCTP deaminase from Dichelobacter nodosus (strain VCS1703A).